Here is a 724-residue protein sequence, read N- to C-terminus: Disks large homolog 4 (724 aa).

Residues Cys3 and Cys5 are each lipidated (S-palmitoyl cysteine). The interval 15–35 (QDEDTPPLEHSPAHLPNQANS) is disordered. 2 consecutive PDZ domains span residues 65–151 (EITL…VMRR) and 160–246 (EIKL…VAKP). Ser73 and Ser142 each carry phosphoserine. The residue at position 240 (Tyr240) is a Phosphotyrosine. Position 295 is a phosphoserine (Ser295). A PDZ 3 domain is found at 313–393 (RIVIHRGSTG…QTVTIIAQYK (81 aa)). A phosphoserine mark is found at Ser415 and Ser418. Residue Thr420 is modified to Phosphothreonine. Ser422, Ser425, Ser449, and Ser480 each carry phosphoserine. Residues 428-498 (KRGFYIRALF…PSKRRVERRE (71 aa)) enclose the SH3 domain. In terms of domain architecture, Guanylate kinase-like spans 534-709 (ARPIIILGPT…IYHKVKRVIE (176 aa)). Tyr580 bears the Phosphotyrosine mark. Phosphoserine is present on residues Ser606 and Ser654. At Tyr715 the chain carries Phosphotyrosine.

It belongs to the MAGUK family. As to quaternary structure, interacts through its PDZ domains with ANO2 and NETO1. Interacts with KCNJ4. Interacts through its first two PDZ domains with GRIN2A, GRIN2B, GRIN2C and GRIN2D. Interacts with ERBB4. Interacts with KCNA1, KCNA2, KCNA3 and KCNA4. Interacts with LRRC4 and LRRC4B. Interacts with SYNGAP1. Interacts with ASIC3. Interacts with SEMA4C. Interacts with CXADR. Interacts with KCND2. Interacts (via first PDZ domain) with CRIPT. Interacts through its first PDZ domain with GRIK2 and KCNA4. Interacts through its second PDZ domain with the PDZ domain of NOS1 or the C-terminus of CAPON. Interacts through its third PDZ domain with NLGN1 and CRIPT, and probably with NLGN2 and NLGN3. Interacts through its guanylate kinase-like domain with DLGAP1/GKAP, DLGAP2, DLGAP3, DLGAP4, MAP1A, BEGAIN and SIPA1L1. Interacts through its guanylate kinase-like domain with KIF13B. Isoform 2 interacts through an L27 domain with HGS/HRS and the first L27 domain of CASK. Interacts with ANKS1B. Interacts with ADR1B. May interact with HTR2A. Interacts with ADAM22, KLHL17 and LGI1. Interacts with FRMPD4 (via C-terminus). Interacts with LRFN1 and LRFN2. Interacts with LRFN4. Interacts (via N-terminal tandem pair of PDZ domains) with GPER1 (via C-terminus tail motif); the interaction is direct and induces the increase of GPER1 protein levels residing at the plasma membrane surface in a estradiol-independent manner. Interacts (via N-terminus tandem pair of PDZ domains) with NOS1 (via N-terminal domain). Interacts with SHANK3. Interacts with GPR85. Interacts with CACNG2 and MPP2 (via the SH3-Guanylate kinase-like sub-module). Interacts with ADGRB1. Found in a complex with PRR7 and GRIN1. Interacts (via PDZ3 domain and to lesser degree via PDZ2 domain) with PRR7. Component of the postsynaptic hippocampal AMPA-type glutamate receptor (AMPAR) complex, at least composed of pore forming AMPAR subunits GRIA1, GRIA2 and GRIA3 and AMPAR auxiliary proteins SHISA6 and SHISA7. Interacts (via its first two PDZ domains) with SHISA6 and SHISA7 (via PDZ-binding motif); the interaction is direct. Interacts (via PDZ domain 2) with SEMA4F (via PDZ-binding motif); this interaction may promote translocation of DLG4/SAP90 to the membrane. Interacts with RPH3A and GRIN2A; this ternary complex regulates NMDA receptor composition at postsynaptic membranes. Interacts with ABR and BCR. Interacts with DGKI (via PDZ-binding motif); controls the localization of DGKI to the synapse. Interacts with C9orf72, SMCR8 and RAB39B. Interacts with ZDHHC5. Interacts with PTEN (via PDZ domain-binding motif); the interaction is induced by NMDA and is required for PTEN location at postsynaptic density. Found in a complex with GRIA1, GRIA2, GRIA3, GRIA4, CACNG8 and CNIH2. Interacts with FAM81A; the interaction facilitates condensate formation via liquid-liquid phase separation. Interacts with ADGRL3. Interacts with SORCS3. Post-translationally, palmitoylated. Palmitoylation is required for targeting to postsynaptic density, plasma membrane and synapses. Palmitoylation by ZDHHC2 occurs when the synaptic activity decreases and induces DLG4 synaptic clustering. Palmitoylation by ZDHHC15 regulates trafficking to the postsynaptic density and function in synaptogenesis. Palmitoylation may play a role in glutamate receptor GRIA1 synapse clustering. Depalmitoylated by ABHD17A and ABHD17B and to a lesser extent by ABHD17C, ABHD12, ABHD13, LYPLA1 and LYPLA2. Undergoes rapid synaptic palmitoylation/depalmitoylation cycle during neuronal development which slows down in mature neurons. In terms of processing, ubiquitinated by MDM2 in response to NMDA receptor activation, leading to proteasome-mediated degradation of DLG4 which is required for AMPA receptor endocytosis. As to expression, expressed in brain (at protein level). Detected in juxtaparanodal zones in the central nervous system and at nerve terminal plexuses of basket cells in the cerebellum. Expressed in cerebrum. Expressed in hippocampal neurons (at protein level). Isoform 1 and isoform 2: highly expressed in cerebellum, cortex, hippocampus, and corpus striatum.

It localises to the cell membrane. It is found in the postsynaptic density. Its subcellular location is the synapse. The protein resides in the cytoplasm. The protein localises to the cell projection. It localises to the axon. It is found in the dendritic spine. Its subcellular location is the dendrite. The protein resides in the presynapse. Postsynaptic scaffolding protein that plays a critical role in synaptogenesis and synaptic plasticity by providing a platform for the postsynaptic clustering of crucial synaptic proteins. Interacts with the cytoplasmic tail of NMDA receptor subunits and shaker-type potassium channels. Required for synaptic plasticity associated with NMDA receptor signaling. Overexpression or depletion of DLG4 changes the ratio of excitatory to inhibitory synapses in hippocampal neurons. May reduce the amplitude of ASIC3 acid-evoked currents by retaining the channel intracellularly. May regulate the intracellular trafficking of ADR1B. Also regulates AMPA-type glutamate receptor (AMPAR) immobilization at postsynaptic density keeping the channels in an activated state in the presence of glutamate and preventing synaptic depression. Under basal conditions, cooperates with FYN to stabilize palmitoyltransferase ZDHHC5 at the synaptic membrane through FYN-mediated phosphorylation of ZDHHC5 and its subsequent inhibition of association with endocytic proteins. This chain is Disks large homolog 4, found in Rattus norvegicus (Rat).